A 581-amino-acid polypeptide reads, in one-letter code: DNA primase (581 aa).

Residues 40–64 form a CHC2-type zinc finger; sequence CPFHNEKTPSFTVNGEKQFYHCFGC. Residues 259 to 341 form the Toprim domain; sequence QRLLVVEGYM…GRQVRFMFLP (83 aa). Mg(2+) is bound by residues glutamate 265, aspartate 309, and aspartate 311.

The protein belongs to the DnaG primase family. Monomer. Interacts with DnaB. It depends on Zn(2+) as a cofactor. Mg(2+) serves as cofactor.

The enzyme catalyses ssDNA + n NTP = ssDNA/pppN(pN)n-1 hybrid + (n-1) diphosphate.. Functionally, RNA polymerase that catalyzes the synthesis of short RNA molecules used as primers for DNA polymerase during DNA replication. This chain is DNA primase, found in Salmonella typhimurium (strain LT2 / SGSC1412 / ATCC 700720).